A 375-amino-acid polypeptide reads, in one-letter code: Ferredoxin--NADP reductase, root-type isozyme, chloroplastic (375 aa).

Residues 1 to 60 (MAHSALSQVSVAVPLQTDSSFRRSTFKATSITFSDRSSWISMPPIDLKAAPSRNQHIVCM) constitute a chloroplast transit peptide. Positions 91 to 219 (KEPYTATIVS…TGPSGKIMLL (129 aa)) constitute an FAD-binding FR-type domain. FAD-binding positions include 151 to 154 (RLYL), 172 to 174 (CVR), Tyr178, 193 to 195 (VCS), and Thr235. Arg174 lines the NADP(+) pocket. NADP(+)-binding positions include Thr235, 266 to 267 (VA), 296 to 297 (SR), Lys306, 334 to 335 (GL), and Glu373.

This sequence belongs to the ferredoxin--NADP reductase type 1 family. It depends on FAD as a cofactor.

Its subcellular location is the plastid. It is found in the chloroplast. The catalysed reaction is 2 reduced [2Fe-2S]-[ferredoxin] + NADP(+) + H(+) = 2 oxidized [2Fe-2S]-[ferredoxin] + NADPH. The protein operates within energy metabolism; photosynthesis. May play a key role in regulating the relative amounts of cyclic and non-cyclic electron flow to meet the demands of the plant for ATP and reducing power. Is involved in nitrate assimilation. In Nicotiana tabacum (Common tobacco), this protein is Ferredoxin--NADP reductase, root-type isozyme, chloroplastic.